Reading from the N-terminus, the 376-residue chain is CYP enzymes assisting alcohol dehydrogenase (376 aa).

Residues cysteine 43, threonine 45, histidine 64, cysteine 94, cysteine 97, cysteine 100, cysteine 108, and cysteine 173 each coordinate Zn(2+). Threonine 45 provides a ligand contact to NAD(+). Threonine 45 and histidine 64 together coordinate substrate. NAD(+) contacts are provided by residues 199–204 (GLGAVG), aspartate 223, lysine 228, 294–296 (LGA), phenylalanine 320, and lysine 371.

The protein belongs to the zinc-containing alcohol dehydrogenase family. Class-III subfamily. As to quaternary structure, homodimer. Zn(2+) serves as cofactor.

The protein operates within alkaloid biosynthesis. Functionally, may be a positive catalyzer of strictosidine production by assisting secologanin biosynthesis, thus being involved in monoterpene indole alkaloids accumulation. This chain is CYP enzymes assisting alcohol dehydrogenase, found in Catharanthus roseus (Madagascar periwinkle).